Here is a 1478-residue protein sequence, read N- to C-terminus: Zinc finger protein 518A (1478 aa).

4 consecutive C2H2-type zinc fingers follow at residues 152 to 174 (FPCE…RKTH), 209 to 231 (FQCE…IHRH), 236 to 258 (YKCG…LRVH), and 264 to 287 (FTCH…ITLH). Positions 355–394 (TQTKSEDQSQEQLNEEKGGRQHCEDGDKPIESGSEKATVL) are disordered. Lys-358 is covalently cross-linked (Glycyl lysine isopeptide (Lys-Gly) (interchain with G-Cter in SUMO2)). Residues 368 to 388 (NEEKGGRQHCEDGDKPIESGS) are compositionally biased toward basic and acidic residues. Glycyl lysine isopeptide (Lys-Gly) (interchain with G-Cter in SUMO2) cross-links involve residues Lys-390 and Lys-428. The disordered stretch occupies residues 464–484 (PSPALQPNTEKESTANLPPQA). Lys-518 participates in a covalent cross-link: Glycyl lysine isopeptide (Lys-Gly) (interchain with G-Cter in SUMO2). Ser-652 carries the post-translational modification Phosphoserine. Positions 656 to 694 (VCENLQRESSNKTVTQQSTSDSDTTSPLRKESSNSDSLL) are disordered. Over residues 670–681 (TQQSTSDSDTTS) the composition is skewed to low complexity. Residues Lys-707, Lys-792, Lys-882, Lys-895, Lys-987, Lys-1008, Lys-1041, Lys-1055, Lys-1078, Lys-1180, and Lys-1441 each participate in a glycyl lysine isopeptide (Lys-Gly) (interchain with G-Cter in SUMO2) cross-link. The segment at 1444–1466 (FNCWFCGRVFDNQDVWAGHGQRH) adopts a C2H2-type 5 zinc-finger fold.

This sequence belongs to the krueppel C2H2-type zinc-finger protein family.

The protein resides in the nucleus. Through its association with the EHMT1-EHMT2/G9A and PRC2/EED-EZH2 histone methyltransferase complexes may function in gene silencing, regulating repressive post-translational methylation of histone tails at promoters of target genes. The chain is Zinc finger protein 518A (Znf518a) from Rattus norvegicus (Rat).